We begin with the raw amino-acid sequence, 414 residues long: Probable isoprenylcysteine alpha-carbonyl methylesterase ICME (414 aa).

Residues 1-54 are disordered; sequence MQPASPVSGDAGPVAEAVPPRGAPQVLVRRRSVPFSPDSPLAPGSRGGGERRST. 2 consecutive transmembrane segments (helical) span residues 90–110 and 145–165; these read LAAL…VGYY and VVAF…GALL. Residues 151 to 153 and 222 to 224 each bind substrate; these read GGA and QSA. Active-site residues include Ser223, Asp323, and His355.

The protein belongs to the AB hydrolase superfamily. Isoprenylcysteine methylesterase family.

Its subcellular location is the endoplasmic reticulum membrane. The protein localises to the golgi apparatus membrane. It carries out the reaction [protein]-C-terminal S-[(2E,6E)-farnesyl]-L-cysteine methyl ester + H2O = [protein]-C-terminal S-[(2E,6E)-farnesyl]-L-cysteine + methanol + H(+). Its function is as follows. Catalyzes the demethylation of isoprenylcysteine methylesters. The polypeptide is Probable isoprenylcysteine alpha-carbonyl methylesterase ICME (IMCE) (Oryza sativa subsp. japonica (Rice)).